A 328-amino-acid polypeptide reads, in one-letter code: Olfactory receptor 4A16 (328 aa).

Over 1-23 (MRPSSNVTEFVLLGLTQDPDVKK) the chain is Extracellular. Asn6 carries an N-linked (GlcNAc...) asparagine glycan. Residues 24–47 (TLFVMFLLIYIVTMVGNLLIWVTT) traverse the membrane as a helical segment. The Cytoplasmic portion of the chain corresponds to 48-55 (IGSPSLGS). Residues 56-77 (LMYFFLAYLSLMDAIYSTAMSP) form a helical membrane-spanning segment. The Extracellular portion of the chain corresponds to 78-98 (KLMIDLLCDKIAISLSACMGQ). An intrachain disulfide couples Cys95 to Cys187. A helical membrane pass occupies residues 99-118 (LFIEHLLGGAEVFLLVVMAY). Residues 119–137 (DRYVAISKPLHYLNIMNRL) lie on the Cytoplasmic side of the membrane. Residues 138–156 (VCILLLVVAMIGGFVHSVV) traverse the membrane as a helical segment. Residues 157–193 (QIVFLYSLPICGPNVIDHSVCDMYPLLELLCLDTYFI) lie on the Extracellular side of the membrane. Residues 194–217 (GLTVVANGGIICMVIFTFLLISCG) form a helical membrane-spanning segment. The Cytoplasmic segment spans residues 218–233 (VILNFLKTYSQEERHK). A helical membrane pass occupies residues 234 to 256 (ALPTCISHIIVVALVFVPCIFMY). At 257–267 (VRPVSNFPFDK) the chain is on the extracellular side. A helical membrane pass occupies residues 268–287 (LMTVFYSIITLMLNPLIYSL). The Cytoplasmic portion of the chain corresponds to 288 to 328 (RQSEMKNAMKNLWCEKLSIVRKRVSPTLNIFIPSSKATNRR).

This sequence belongs to the G-protein coupled receptor 1 family.

The protein localises to the cell membrane. Functionally, odorant receptor. The protein is Olfactory receptor 4A16 (OR4A16) of Homo sapiens (Human).